The primary structure comprises 301 residues: Protein KTI12 homolog (301 aa).

8-15 (GQPCSGKS) contacts ATP. The tract at residues 262-275 (LRRTFIKLAGQYSL) is calmodulin-binding.

This sequence belongs to the KTI12 family. Interacts with the elongator complex. Binds to calmodulin in a calcium-dependent manner.

It localises to the cytoplasm. The protein localises to the nucleus. Functionally, elongator complex-associated factor that is not a structural subunit but rather transiently contacts the complex. Regulates both meristem activity and organ growth; acts as a positive regulator of adaxial leaf patterning. Required for an early step in synthesis of 5-carbamoylmethyl (ncm5) groups present on uridines (ncm5U) at the wobble position in tRNA. This is Protein KTI12 homolog from Oryza sativa subsp. indica (Rice).